Consider the following 1818-residue polypeptide: Nestin (1818 aa).

The coil 1B stretch occupies residues 1–14 (WREKLEAEVQRQNL). Positions 1–135 (WREKLEAEVQ…TLLEAENSRL (135 aa)) constitute an IF rod domain. Residues 15-17 (YQE) form a linker 2 region. Residues 18 to 135 (RVAHMESSLG…TLLEAENSRL (118 aa)) form a coil 2B region. The residue at position 133 (S133) is a Phosphoserine. Residues 136–1818 (QTPGRSSQAS…DRDSWSSGED (1683 aa)) form a tail region. Phosphothreonine is present on residues T137 and T160. Residue S180 is modified to Phosphoserine. T210 is subject to Phosphothreonine. 4 disordered regions span residues 266 to 309 (EEAG…GSSI), 336 to 355 (AQETQEDGLHTEEIQDSQGP), 377 to 451 (HETP…SPEG), and 480 to 787 (AFKK…EEDQ). Phosphoserine is present on S288. Residues 292-303 (PVLEAKDGDSTE) are compositionally biased toward basic and acidic residues. The span at 382 to 398 (KENCNSLRSVDENQGTL) shows a compositional bias: polar residues. Phosphoserine occurs at positions 390 and 400. Composition is skewed to basic and acidic residues over residues 400-427 (SPEEEKQTLLKSLEEKDVEVEKTLEKGV) and 434-443 (LGKEDPRIED). S448 is subject to Phosphoserine. Residues 495–508 (EIQRVERLIEKEGQ) are compositionally biased toward basic and acidic residues. At S513 the chain carries Phosphoserine. Basic and acidic residues-rich tracts occupy residues 521 to 536 (TDRPLEKENGEPLKPV) and 565 to 586 (TDRPLEKEEDQLVERLVEKEGQ). S591 carries the phosphoserine modification. Basic and acidic residues-rich tracts occupy residues 599 to 614 (TDRPLEKENGEPLKPV), 643 to 664 (TDRPLEKEEDQLVERLVEKEGQ), and 711 to 732 (TDRPLEKEEDQRVERLIEKEGQ). Residue S737 is modified to Phosphoserine. A compositionally biased stretch (basic and acidic residues) spans 744-773 (ETYRLLEKENGEPLKPVEEEDQRVERLIEK). Phosphoserine occurs at positions 803 and 824. The segment at 866 to 900 (ESLLKKGTQESLESHEDRNQETQDPQRFLEEEGQG) is disordered. Over residues 868–886 (LLKKGTQESLESHEDRNQE) the composition is skewed to basic and acidic residues. 2 positions are modified to phosphoserine: S915 and S957. The disordered stretch occupies residues 945 to 998 (SLLERESQDSGKSLEGQEAFRCLGKEDPESLQFPEVQDQEIQRSLQQETQQTLG). Polar residues predominate over residues 986–997 (QRSLQQETQQTL). Residue K1043 forms a Glycyl lysine isopeptide (Lys-Gly) (interchain with G-Cter in SUMO1); alternate linkage. A Glycyl lysine isopeptide (Lys-Gly) (interchain with G-Cter in SUMO2); alternate cross-link involves residue K1043. 7 positions are modified to phosphoserine: S1052, S1063, S1073, S1123, S1134, S1162, and S1238. 2 disordered regions span residues 1134–1262 (SPEA…LEGQ) and 1334–1818 (HPSL…SGED). Basic and acidic residues-rich tracts occupy residues 1342-1361 (VEAKIAHDLEGPGKEPKEAG) and 1401-1416 (ASDHEGSDAPEPRPSE). Acidic residues predominate over residues 1490-1505 (QDWEESREESEADELG). S1495, S1499, and S1523 each carry phosphoserine. Residues 1570-1579 (LSSEEFEDLG) show a composition bias toward acidic residues. Phosphoserine is present on residues S1614 and S1623. Residues 1616–1636 (GFADEEESGEEGEEEEHEDGT) show a composition bias toward acidic residues. The segment covering 1686–1697 (GLETESQDSAEP) has biased composition (polar residues). Residues S1698, S1700, S1791, S1814, and S1815 each carry the phosphoserine modification. The segment covering 1698–1708 (SGSEVSESVSS) has biased composition (low complexity).

It belongs to the intermediate filament family. In terms of assembly, interacts with FHOD3. Forms homodimers and homotetramers in vitro. In mixtures with other intermediate filament proteins such as vimentin and alpha-internexin, preferentially forms heterodimers which can assemble to form intermediate filaments if nestin does not exceed 25%. Constitutively phosphorylated. This increases during mitosis when the cytoplasmic intermediate filament network is reorganized.

Its function is as follows. Required for brain and eye development. Promotes the disassembly of phosphorylated vimentin intermediate filaments (IF) during mitosis and may play a role in the trafficking and distribution of IF proteins and other cellular factors to daughter cells during progenitor cell division. Required for survival, renewal and mitogen-stimulated proliferation of neural progenitor cells. This is Nestin from Mesocricetus auratus (Golden hamster).